The sequence spans 466 residues: Ribulose bisphosphate carboxylase large chain (466 aa).

Position 5 is an N6,N6,N6-trimethyllysine (K5). Substrate contacts are provided by N114 and T164. K166 functions as the Proton acceptor in the catalytic mechanism. Position 168 (K168) interacts with substrate. The Mg(2+) site is built by K192, D194, and E195. K192 is modified (N6-carboxylysine). The active-site Proton acceptor is H285. 3 residues coordinate substrate: R286, H318, and S370.

The protein belongs to the RuBisCO large chain family. Type I subfamily. As to quaternary structure, heterohexadecamer of 8 large chains and 8 small chains; disulfide-linked. The disulfide link is formed within the large subunit homodimers. It depends on Mg(2+) as a cofactor. In terms of processing, the disulfide bond which can form in the large chain dimeric partners within the hexadecamer appears to be associated with oxidative stress and protein turnover.

The protein localises to the plastid. The protein resides in the chloroplast. The enzyme catalyses 2 (2R)-3-phosphoglycerate + 2 H(+) = D-ribulose 1,5-bisphosphate + CO2 + H2O. It carries out the reaction D-ribulose 1,5-bisphosphate + O2 = 2-phosphoglycolate + (2R)-3-phosphoglycerate + 2 H(+). RuBisCO catalyzes two reactions: the carboxylation of D-ribulose 1,5-bisphosphate, the primary event in carbon dioxide fixation, as well as the oxidative fragmentation of the pentose substrate in the photorespiration process. Both reactions occur simultaneously and in competition at the same active site. The polypeptide is Ribulose bisphosphate carboxylase large chain (Coriaria myrtifolia (Tanner's sumac)).